Reading from the N-terminus, the 61-residue chain is Large ribosomal subunit protein uL29 (61 aa).

It belongs to the universal ribosomal protein uL29 family.

The polypeptide is Large ribosomal subunit protein uL29 (Xanthomonas campestris pv. campestris (strain 8004)).